The sequence spans 386 residues: Erythronate-4-phosphate dehydrogenase (386 aa).

Positions 59 and 81 each coordinate substrate. Asp-162 contacts NAD(+). Residue Arg-239 is part of the active site. Residue Asp-262 coordinates NAD(+). Residue Glu-267 is part of the active site. His-284 (proton donor) is an active-site residue. NAD(+) is bound at residue Gly-287. Tyr-288 contributes to the substrate binding site.

The protein belongs to the D-isomer specific 2-hydroxyacid dehydrogenase family. PdxB subfamily. Homodimer.

The protein localises to the cytoplasm. The catalysed reaction is 4-phospho-D-erythronate + NAD(+) = (R)-3-hydroxy-2-oxo-4-phosphooxybutanoate + NADH + H(+). The protein operates within cofactor biosynthesis; pyridoxine 5'-phosphate biosynthesis; pyridoxine 5'-phosphate from D-erythrose 4-phosphate: step 2/5. Functionally, catalyzes the oxidation of erythronate-4-phosphate to 3-hydroxy-2-oxo-4-phosphonooxybutanoate. This chain is Erythronate-4-phosphate dehydrogenase, found in Psychrobacter cryohalolentis (strain ATCC BAA-1226 / DSM 17306 / VKM B-2378 / K5).